The following is a 474-amino-acid chain: MKKVQDYEFWFVTGSQFLYGEETLRSVEKDAKEIVDKLNESKKLPYPVKFKLVATTAENITEVMKEVNYNDKVAGVITWMHTFSPAKNWIRGTELLQKPLLHLATQFLNHIPYDTIDFDYMNLNQSAHGDREYAFINARLRKNNKIISGYWGDEGIQKQIAKWMDVAVAYNESYGIKVVTFADKMRNVAVTDGDKIEAQIKFGWTVDYWGVADLVEEVNAVSDEDIDKKYEEMKNDYNFVEGQNSSEKFEHNTKYQIREYFGLKKFMDDRGYTAFTTNFEDLAGLEQLPGLAAQMLMAEGYGFAGEGDWKTAALDRLLKIMAHNKQTVFMEDYTLDLREGHEAILGSHMLEVDPSIASDTPRVEVHPLDIGGKEDPARFVFTGMEGDAVDVTMADYGDEFKLMSYDVTGNKTEKETPYLPVAKQLWTPKQGWKQGAEGWLTLGGGHHTVLSFAIDAEQLQDLSNMFGLTYVNIK.

Residues E306, E331, H348, and H447 each coordinate Mn(2+).

The protein belongs to the arabinose isomerase family. Requires Mn(2+) as cofactor.

The catalysed reaction is beta-L-arabinopyranose = L-ribulose. It participates in carbohydrate degradation; L-arabinose degradation via L-ribulose; D-xylulose 5-phosphate from L-arabinose (bacterial route): step 1/3. Its function is as follows. Catalyzes the conversion of L-arabinose to L-ribulose. This Pediococcus pentosaceus (strain ATCC 25745 / CCUG 21536 / LMG 10740 / 183-1w) protein is L-arabinose isomerase.